The following is a 214-amino-acid chain: Probable transaldolase (214 aa).

K83 functions as the Schiff-base intermediate with substrate in the catalytic mechanism.

This sequence belongs to the transaldolase family. Type 3B subfamily.

It is found in the cytoplasm. It carries out the reaction D-sedoheptulose 7-phosphate + D-glyceraldehyde 3-phosphate = D-erythrose 4-phosphate + beta-D-fructose 6-phosphate. It functions in the pathway carbohydrate degradation; pentose phosphate pathway; D-glyceraldehyde 3-phosphate and beta-D-fructose 6-phosphate from D-ribose 5-phosphate and D-xylulose 5-phosphate (non-oxidative stage): step 2/3. Transaldolase is important for the balance of metabolites in the pentose-phosphate pathway. The chain is Probable transaldolase from Maridesulfovibrio salexigens (strain ATCC 14822 / DSM 2638 / NCIMB 8403 / VKM B-1763) (Desulfovibrio salexigens).